The following is a 184-amino-acid chain: 2-C-methyl-D-erythritol 2,4-cyclodiphosphate synthase (184 aa).

A divalent metal cation-binding residues include D17 and H19. 4-CDP-2-C-methyl-D-erythritol 2-phosphate contacts are provided by residues 17–19 and 47–48; these read DVH and HS. A divalent metal cation is bound at residue H55. 4-CDP-2-C-methyl-D-erythritol 2-phosphate-binding positions include 74–78, F152, and R155; that span reads FPNTD.

This sequence belongs to the IspF family. Homotrimer. The cofactor is a divalent metal cation.

It carries out the reaction 4-CDP-2-C-methyl-D-erythritol 2-phosphate = 2-C-methyl-D-erythritol 2,4-cyclic diphosphate + CMP. The protein operates within isoprenoid biosynthesis; isopentenyl diphosphate biosynthesis via DXP pathway; isopentenyl diphosphate from 1-deoxy-D-xylulose 5-phosphate: step 4/6. Its function is as follows. Involved in the biosynthesis of isopentenyl diphosphate (IPP) and dimethylallyl diphosphate (DMAPP), two major building blocks of isoprenoid compounds. Catalyzes the conversion of 4-diphosphocytidyl-2-C-methyl-D-erythritol 2-phosphate (CDP-ME2P) to 2-C-methyl-D-erythritol 2,4-cyclodiphosphate (ME-CPP) with a corresponding release of cytidine 5-monophosphate (CMP). The protein is 2-C-methyl-D-erythritol 2,4-cyclodiphosphate synthase of Anaplasma marginale (strain St. Maries).